A 190-amino-acid chain; its full sequence is MARANEIKRGMAVNLNGKLLLVKDIDVQSPSARGASTLYKMRFSDVRTGLKVEERFKGDEILDTITLTRRSVNFSYIDGDEYVFMDDEDFTPYNFKKEQIEEELLFIPEGGMPGMQVLTMDGQLLALELPQTVDMEIVETAPSIKGASASARNKPAVMSTGLSIQVPEYISPGEKIRIHIVERRYMGRAD.

This sequence belongs to the elongation factor P family.

The sequence is that of Elongation factor P-like protein from Yersinia enterocolitica serotype O:8 / biotype 1B (strain NCTC 13174 / 8081).